A 726-amino-acid polypeptide reads, in one-letter code: Long-chain-fatty-acid--CoA ligase ACSBG1 (726 aa).

The tract at residues 1–39 (MPDSRAAPQESLLDASLGTTQENVGTSSLTDGQTLSKEP) is disordered. Positions 17-36 (LGTTQENVGTSSLTDGQTLS) are enriched in polar residues. Residue Ser-36 is modified to Phosphoserine. Residue Tyr-641 is modified to Phosphotyrosine. The disordered stretch occupies residues 707 to 726 (SKQGSSLPGFSLRWQTGASS).

This sequence belongs to the ATP-dependent AMP-binding enzyme family. Bubblegum subfamily.

The protein resides in the cytoplasm. It is found in the cytoplasmic vesicle. It localises to the microsome. The protein localises to the endoplasmic reticulum. Its subcellular location is the cell membrane. It carries out the reaction a long-chain fatty acid + ATP + CoA = a long-chain fatty acyl-CoA + AMP + diphosphate. It catalyses the reaction (E)-hexadec-2-enoate + ATP + CoA = (2E)-hexadecenoyl-CoA + AMP + diphosphate. The enzyme catalyses hexadecanoate + ATP + CoA = hexadecanoyl-CoA + AMP + diphosphate. Functionally, catalyzes the conversion of fatty acids such as long-chain and very long-chain fatty acids to their active form acyl-CoAs for both synthesis of cellular lipids, and degradation via beta-oxidation. Can activate diverse saturated, monosaturated and polyunsaturated fatty acids. The polypeptide is Long-chain-fatty-acid--CoA ligase ACSBG1 (Bos taurus (Bovine)).